A 537-amino-acid chain; its full sequence is Chaperonin GroEL 1 (537 aa).

ATP contacts are provided by residues Thr29–Pro32, Asp86–Thr90, Gly413, Asn478–Ala480, and Asp494.

The protein belongs to the chaperonin (HSP60) family. Forms a cylinder of 14 subunits composed of two heptameric rings stacked back-to-back. Interacts with the co-chaperonin GroES.

It is found in the cytoplasm. It catalyses the reaction ATP + H2O + a folded polypeptide = ADP + phosphate + an unfolded polypeptide.. Together with its co-chaperonin GroES, plays an essential role in assisting protein folding. The GroEL-GroES system forms a nano-cage that allows encapsulation of the non-native substrate proteins and provides a physical environment optimized to promote and accelerate protein folding. This chain is Chaperonin GroEL 1, found in Corynebacterium efficiens (strain DSM 44549 / YS-314 / AJ 12310 / JCM 11189 / NBRC 100395).